We begin with the raw amino-acid sequence, 179 residues long: Large ribosomal subunit protein uL6 (179 aa).

The protein belongs to the universal ribosomal protein uL6 family. As to quaternary structure, part of the 50S ribosomal subunit.

Its function is as follows. This protein binds to the 23S rRNA, and is important in its secondary structure. It is located near the subunit interface in the base of the L7/L12 stalk, and near the tRNA binding site of the peptidyltransferase center. In Mycolicibacterium vanbaalenii (strain DSM 7251 / JCM 13017 / BCRC 16820 / KCTC 9966 / NRRL B-24157 / PYR-1) (Mycobacterium vanbaalenii), this protein is Large ribosomal subunit protein uL6.